We begin with the raw amino-acid sequence, 296 residues long: Light-independent protochlorophyllide reductase iron-sulfur ATP-binding protein (296 aa).

ATP-binding positions include 39-44 (GIGKST) and K68. S43 serves as a coordination point for Mg(2+). Positions 124 and 158 each coordinate [4Fe-4S] cluster. 209–210 (NR) contacts ATP.

The protein belongs to the NifH/BchL/ChlL family. Homodimer. Protochlorophyllide reductase is composed of three subunits; ChlL, ChlN and ChlB. Requires [4Fe-4S] cluster as cofactor.

It catalyses the reaction chlorophyllide a + oxidized 2[4Fe-4S]-[ferredoxin] + 2 ADP + 2 phosphate = protochlorophyllide a + reduced 2[4Fe-4S]-[ferredoxin] + 2 ATP + 2 H2O. It participates in porphyrin-containing compound metabolism; chlorophyll biosynthesis (light-independent). Its function is as follows. Component of the dark-operative protochlorophyllide reductase (DPOR) that uses Mg-ATP and reduced ferredoxin to reduce ring D of protochlorophyllide (Pchlide) to form chlorophyllide a (Chlide). This reaction is light-independent. The L component serves as a unique electron donor to the NB-component of the complex, and binds Mg-ATP. This chain is Light-independent protochlorophyllide reductase iron-sulfur ATP-binding protein, found in Synechococcus sp. (strain WH7803).